Here is a 193-residue protein sequence, read N- to C-terminus: Ribosomal RNA small subunit methyltransferase G (193 aa).

Residues Gly-62, Phe-67, 111 to 112 (IE), and Arg-125 each bind S-adenosyl-L-methionine.

The protein belongs to the methyltransferase superfamily. RNA methyltransferase RsmG family.

The protein resides in the cytoplasm. It catalyses the reaction guanosine(527) in 16S rRNA + S-adenosyl-L-methionine = N(7)-methylguanosine(527) in 16S rRNA + S-adenosyl-L-homocysteine. In terms of biological role, specifically methylates the N7 position of guanine in position 527 of 16S rRNA. The sequence is that of Ribosomal RNA small subunit methyltransferase G from Gluconobacter oxydans (strain 621H) (Gluconobacter suboxydans).